We begin with the raw amino-acid sequence, 393 residues long: NAD(P)H-quinone oxidoreductase subunit H, chloroplastic (393 aa).

It belongs to the complex I 49 kDa subunit family. As to quaternary structure, NDH is composed of at least 16 different subunits, 5 of which are encoded in the nucleus.

It is found in the plastid. Its subcellular location is the chloroplast thylakoid membrane. It carries out the reaction a plastoquinone + NADH + (n+1) H(+)(in) = a plastoquinol + NAD(+) + n H(+)(out). The enzyme catalyses a plastoquinone + NADPH + (n+1) H(+)(in) = a plastoquinol + NADP(+) + n H(+)(out). In terms of biological role, NDH shuttles electrons from NAD(P)H:plastoquinone, via FMN and iron-sulfur (Fe-S) centers, to quinones in the photosynthetic chain and possibly in a chloroplast respiratory chain. The immediate electron acceptor for the enzyme in this species is believed to be plastoquinone. Couples the redox reaction to proton translocation, and thus conserves the redox energy in a proton gradient. The polypeptide is NAD(P)H-quinone oxidoreductase subunit H, chloroplastic (Trifolium subterraneum (Subterranean clover)).